The sequence spans 556 residues: Large cysteine-rich periplasmic protein OmcB (556 aa).

The signal sequence occupies residues 1–22 (MSKLIRRVVTVLALTSMASCFA). Positions 23–40 (SGGIEAAVAESLITKIVA) are excised as a propeptide.

Part of a disulfide cross-linked outer membrane complex (COMC) composed of the major outer membrane porin (MOMP), the small cysteine-rich protein (OmcA) and the large cysteine-rich periplasmic protein (OmcB).

Its subcellular location is the periplasm. In terms of biological role, in elementary bodies (EBs, the infectious stage, which is able to survive outside the host cell) provides the structural integrity of the outer envelope through disulfide cross-links with the small cysteine-rich protein and the major outer membrane porin. It has been described in publications as the Sarkosyl-insoluble COMC (Chlamydia outer membrane complex), and serves as the functional equivalent of peptidoglycan. In Chlamydia pneumoniae (Chlamydophila pneumoniae), this protein is Large cysteine-rich periplasmic protein OmcB (omcB).